The primary structure comprises 197 residues: Xanthine phosphoribosyltransferase (197 aa).

Xanthine is bound by residues Leu-20 and Asn-27. 128–132 (ANGQA) serves as a coordination point for 5-phospho-alpha-D-ribose 1-diphosphate. Residue Lys-156 participates in xanthine binding.

This sequence belongs to the purine/pyrimidine phosphoribosyltransferase family. Xpt subfamily. As to quaternary structure, homodimer.

It is found in the cytoplasm. The catalysed reaction is XMP + diphosphate = xanthine + 5-phospho-alpha-D-ribose 1-diphosphate. Its pathway is purine metabolism; XMP biosynthesis via salvage pathway; XMP from xanthine: step 1/1. Functionally, converts the preformed base xanthine, a product of nucleic acid breakdown, to xanthosine 5'-monophosphate (XMP), so it can be reused for RNA or DNA synthesis. This chain is Xanthine phosphoribosyltransferase, found in Bacillus cereus (strain ZK / E33L).